Consider the following 495-residue polypeptide: Ectonucleoside triphosphate diphosphohydrolase 2 (495 aa).

At 1–4 the chain is on the cytoplasmic side; the sequence is MAGK. Residues 5 to 25 traverse the membrane as a helical segment; sequence LVSLVPPLLLAAAGLTGLLLL. Over 26-462 the chain is Extracellular; that stretch reads CVPTQDVREP…PGLRKGTHFS (437 aa). N-linked (GlcNAc...) asparagine glycosylation occurs at Asn-64. The cysteines at positions 75 and 99 are disulfide-linked. The N-linked (GlcNAc...) asparagine glycan is linked to Asn-129. The Proton acceptor role is filled by Glu-165. 204–208 is an ATP binding site; that stretch reads GASTQ. Disulfide bonds link Cys-242–Cys-284 and Cys-265–Cys-310. N-linked (GlcNAc...) asparagine glycans are attached at residues Asn-294, Asn-306, and Asn-319. Intrachain disulfides connect Cys-323-Cys-328 and Cys-377-Cys-399. N-linked (GlcNAc...) asparagine glycosylation is found at Asn-378 and Asn-443. A helical membrane pass occupies residues 463-483; that stretch reads SWVALLLLFTVLILAALVLLL. At 484 to 495 the chain is on the cytoplasmic side; that stretch reads RQVRSAKSPGAL.

Belongs to the GDA1/CD39 NTPase family. Requires Ca(2+) as cofactor. It depends on Mg(2+) as a cofactor. As to expression, expressed in brain, heart, vas deferens, kidney, skeletal muscle, thymus, lung and spleen. Weak expression in liver.

The protein resides in the cell membrane. Functionally, in the nervous system, could hydrolyze ATP and other nucleotides to regulate purinergic neurotransmission. Hydrolyzes ADP only to a marginal extent. This is Ectonucleoside triphosphate diphosphohydrolase 2 (Entpd2) from Rattus norvegicus (Rat).